Consider the following 318-residue polypeptide: NADH-ubiquinone oxidoreductase chain 1 (318 aa).

Transmembrane regions (helical) follow at residues phenylalanine 2–leucine 22, methionine 70–proline 90, leucine 100–glycine 120, alanine 147–isoleucine 167, tyrosine 171–alanine 191, alanine 217–phenylalanine 237, leucine 254–serine 276, and leucine 294–isoleucine 314.

Belongs to the complex I subunit 1 family. Core subunit of respiratory chain NADH dehydrogenase (Complex I) which is composed of 45 different subunits.

The protein localises to the mitochondrion inner membrane. It catalyses the reaction a ubiquinone + NADH + 5 H(+)(in) = a ubiquinol + NAD(+) + 4 H(+)(out). Its function is as follows. Core subunit of the mitochondrial membrane respiratory chain NADH dehydrogenase (Complex I) which catalyzes electron transfer from NADH through the respiratory chain, using ubiquinone as an electron acceptor. Essential for the catalytic activity and assembly of complex I. The sequence is that of NADH-ubiquinone oxidoreductase chain 1 (MT-ND1) from Equus asinus (Donkey).